The primary structure comprises 82 residues: Beta-neurotoxin Css9 (82 aa).

Positions 1–17 are cleaved as a signal peptide; the sequence is MKLLMLIVALMIIGVQS. Residues 18-81 form the LCN-type CS-alpha/beta domain; sequence KDGYPMDHKG…VWDRATNKCR (64 aa). 4 cysteine pairs are disulfide-bonded: cysteine 28–cysteine 80, cysteine 32–cysteine 54, cysteine 39–cysteine 61, and cysteine 43–cysteine 63.

Belongs to the long (4 C-C) scorpion toxin superfamily. Sodium channel inhibitor family. Beta subfamily. In terms of tissue distribution, expressed by the venom gland.

It is found in the secreted. Its function is as follows. Beta toxins bind voltage-independently at site-4 of sodium channels (Nav) and shift the voltage of activation toward more negative potentials thereby affecting sodium channel activation and promoting spontaneous and repetitive firing. This toxin compete with high affinity with 125I-Css4 bound on rat brain synaptosome and may bind with high affinity to Nav1.1/SCN1A, Nav1.2/SCN2A and Nav1.6/SCN8A. The sequence is that of Beta-neurotoxin Css9 from Centruroides suffusus (Durango bark scorpion).